Reading from the N-terminus, the 61-residue chain is Small ribosomal subunit protein uS14 (61 aa).

Positions 24, 27, 40, and 43 each coordinate Zn(2+).

Belongs to the universal ribosomal protein uS14 family. Zinc-binding uS14 subfamily. As to quaternary structure, part of the 30S ribosomal subunit. Contacts proteins S3 and S10. Zn(2+) is required as a cofactor.

Functionally, binds 16S rRNA, required for the assembly of 30S particles and may also be responsible for determining the conformation of the 16S rRNA at the A site. The chain is Small ribosomal subunit protein uS14 from Ruminiclostridium cellulolyticum (strain ATCC 35319 / DSM 5812 / JCM 6584 / H10) (Clostridium cellulolyticum).